A 101-amino-acid chain; its full sequence is Small ribosomal subunit protein uS14 (101 aa).

Belongs to the universal ribosomal protein uS14 family. In terms of assembly, part of the 30S ribosomal subunit. Contacts proteins S3 and S10.

Binds 16S rRNA, required for the assembly of 30S particles and may also be responsible for determining the conformation of the 16S rRNA at the A site. This chain is Small ribosomal subunit protein uS14, found in Haemophilus ducreyi (strain 35000HP / ATCC 700724).